A 257-amino-acid polypeptide reads, in one-letter code: Ditrans,polycis-undecaprenyl-diphosphate synthase ((2E,6E)-farnesyl-diphosphate specific) (257 aa).

Residue Asp23 is part of the active site. Asp23 contributes to the Mg(2+) binding site. Residues 24–27 (GNGR), Trp28, Arg36, His40, and 68–70 (SSE) each bind substrate. Asn71 functions as the Proton acceptor in the catalytic mechanism. Residues Trp72, Arg74, Arg191, and 197 to 199 (RIS) contribute to the substrate site. Mg(2+) is bound at residue Glu210.

This sequence belongs to the UPP synthase family. Homodimer. The cofactor is Mg(2+).

It carries out the reaction 8 isopentenyl diphosphate + (2E,6E)-farnesyl diphosphate = di-trans,octa-cis-undecaprenyl diphosphate + 8 diphosphate. Catalyzes the sequential condensation of isopentenyl diphosphate (IPP) with (2E,6E)-farnesyl diphosphate (E,E-FPP) to yield (2Z,6Z,10Z,14Z,18Z,22Z,26Z,30Z,34E,38E)-undecaprenyl diphosphate (di-trans,octa-cis-UPP). UPP is the precursor of glycosyl carrier lipid in the biosynthesis of bacterial cell wall polysaccharide components such as peptidoglycan and lipopolysaccharide. This is Ditrans,polycis-undecaprenyl-diphosphate synthase ((2E,6E)-farnesyl-diphosphate specific) from Xanthomonas axonopodis pv. citri (strain 306).